We begin with the raw amino-acid sequence, 517 residues long: Crotonobetaine/carnitine--CoA ligase (517 aa).

The protein belongs to the ATP-dependent AMP-binding enzyme family.

It carries out the reaction 4-(trimethylamino)butanoate + ATP + CoA = 4-(trimethylamino)butanoyl-CoA + AMP + diphosphate. It catalyses the reaction crotonobetaine + ATP + CoA = crotonobetainyl-CoA + AMP + diphosphate. The catalysed reaction is (R)-carnitine + ATP + CoA = (R)-carnitinyl-CoA + AMP + diphosphate. It participates in amine and polyamine metabolism; carnitine metabolism. Its function is as follows. Catalyzes the transfer of CoA to carnitine, generating the initial carnitinyl-CoA needed for the CaiB reaction cycle. Also has activity toward crotonobetaine and gamma-butyrobetaine. The sequence is that of Crotonobetaine/carnitine--CoA ligase from Citrobacter koseri (strain ATCC BAA-895 / CDC 4225-83 / SGSC4696).